Reading from the N-terminus, the 447-residue chain is Alpha-1,6-mannosyl-glycoprotein 2-beta-N-acetylglucosaminyltransferase (447 aa).

The Cytoplasmic portion of the chain corresponds to Met-1–Lys-9. A helical; Signal-anchor for type II membrane protein transmembrane segment spans residues Val-10–Gly-29. Residues Arg-30–Gln-447 lie on the Lumenal side of the membrane. N-linked (GlcNAc...) asparagine glycosylation is found at Asn-69 and Asn-86. Substrate-binding positions include Gln-123–Arg-127 and Asp-154. A disulfide bridge connects residues Cys-196 and Cys-210. Gln-229–His-233 provides a ligand contact to substrate. Residue Asp-261 participates in Mn(2+) binding. Cysteines 283 and 286 form a disulfide. Arg-298 lines the substrate pocket. Intrachain disulfides connect Cys-334–Cys-357, Cys-339–Cys-440, and Cys-378–Cys-386. His-374 contributes to the Mn(2+) binding site.

This sequence belongs to the glycosyltransferase 16 (GT16) protein family. In terms of assembly, homodimer. The cofactor is Mn(2+).

The protein localises to the golgi apparatus membrane. The catalysed reaction is an N(4)-{beta-D-GlcNAc-(1-&gt;2)-alpha-D-Man-(1-&gt;3)-[alpha-D-Man-(1-&gt;6)]-beta-D-Man-(1-&gt;4)-beta-D-GlcNAc-(1-&gt;4)-beta-D-GlcNAc}-L-asparaginyl-[protein] + UDP-N-acetyl-alpha-D-glucosamine = N(4)-{beta-D-GlcNAc-(1-&gt;2)-alpha-D-Man-(1-&gt;3)-[beta-D-GlcNAc-(1-&gt;2)-alpha-D-Man-(1-&gt;6)]-beta-D-Man-(1-&gt;4)-beta-D-GlcNAc-(1-&gt;4)-beta-D-GlcNAc}-L-asparaginyl-[protein] + UDP + H(+). It functions in the pathway protein modification; protein glycosylation. In terms of biological role, plays an essential role in protein N-glycosylation. Catalyzes the transfer of N-acetylglucosamine (GlcNAc) onto the free terminal mannose moiety in the core structure of the nascent N-linked glycan chain, giving rise to the second branch in complex glycans. This chain is Alpha-1,6-mannosyl-glycoprotein 2-beta-N-acetylglucosaminyltransferase (MGAT2), found in Homo sapiens (Human).